The following is a 405-amino-acid chain: MQYTEIMVRYGELSTKGKNRRNFIDSLGRNVRKALHDFPELKVHANRDRMHIMLNGEDADKVMGRLKLVFGIQNFSPSIRVDADMDAVYETAIAMVKAQFKPGMTFKIYTRRSDHQFEYDTNQINDMLGGQILDHVDGIQVKMKNPDIVLRVEVRLNGIFLSSETIQGAGGLPVGTAGKGMLMLSGGIDSPVAGYLGMKRGVDMEMVHFFSPPYTSEQALAKAKQLASTLASYSGSVKFIQIPFTEIQEEIKEKVPEGYLMTVQRRLMMRLMDAITRQRHGKAIFNGESLGQVASQTMDSMIAINDVTTLPVLRPVISMDKTEIIKIAEDIDTYDLSIMPFEDCCTIFAPPAPKTHPKLDRSRSYEERIDVEGLMARALAGVKMTEIKPGENYLNTQEDVFAELL.

A THUMP domain is found at 60-165 (DKVMGRLKLV…LNGIFLSSET (106 aa)). ATP is bound by residues 183–184 (ML), 208–209 (HF), R265, G287, and Q296.

It belongs to the ThiI family.

The protein localises to the cytoplasm. It catalyses the reaction [ThiI sulfur-carrier protein]-S-sulfanyl-L-cysteine + a uridine in tRNA + 2 reduced [2Fe-2S]-[ferredoxin] + ATP + H(+) = [ThiI sulfur-carrier protein]-L-cysteine + a 4-thiouridine in tRNA + 2 oxidized [2Fe-2S]-[ferredoxin] + AMP + diphosphate. It carries out the reaction [ThiS sulfur-carrier protein]-C-terminal Gly-Gly-AMP + S-sulfanyl-L-cysteinyl-[cysteine desulfurase] + AH2 = [ThiS sulfur-carrier protein]-C-terminal-Gly-aminoethanethioate + L-cysteinyl-[cysteine desulfurase] + A + AMP + 2 H(+). Its pathway is cofactor biosynthesis; thiamine diphosphate biosynthesis. Its function is as follows. Catalyzes the ATP-dependent transfer of a sulfur to tRNA to produce 4-thiouridine in position 8 of tRNAs, which functions as a near-UV photosensor. Also catalyzes the transfer of sulfur to the sulfur carrier protein ThiS, forming ThiS-thiocarboxylate. This is a step in the synthesis of thiazole, in the thiamine biosynthesis pathway. The sulfur is donated as persulfide by IscS. This Lactiplantibacillus plantarum (strain ATCC BAA-793 / NCIMB 8826 / WCFS1) (Lactobacillus plantarum) protein is Probable tRNA sulfurtransferase.